Consider the following 404-residue polypeptide: Nuclear receptor subfamily 2 group F member 6 (404 aa).

The segment covering 1–15 (MAMVTGGWGGPGGDT) has biased composition (gly residues). The tract at residues 1-49 (MAMVTGGWGGPGGDTNGVDKAGGYPRAAEDDSASPPGAASDAEPGDEER) is disordered. Residues 33–42 (ASPPGAASDA) are compositionally biased toward low complexity. A phosphoserine mark is found at Ser-34 and Ser-40. Positions 53–128 (QVDCVVCGDK…VGMRKEAVQR (76 aa)) form a DNA-binding region, nuclear receptor. The NR C4-type zinc-finger motif lies at 56–76 (CVVCGDKSSGKHYGVFTCEGC). At Ser-83 the chain carries Phosphoserine. The segment at 92-116 (CRSNRDCQIDQHHRNQCQYCRLKKC) adopts an NR C4-type zinc-finger fold. Residues 165 to 393 (PVSELIAQLL…TLIRDMLLSG (229 aa)) enclose the NR LBD domain. The interval 327-404 (LQEKAQVALT…TFNWPYGSGQ (78 aa)) is important for dimerization.

Belongs to the nuclear hormone receptor family. NR2 subfamily. As to quaternary structure, binds DNA as dimer; homodimer and heterodimer with NR2F2 and probably NR2F1. Interacts with THRB. As to expression, expressed in heart, placenta, liver, skeletal muscle, kidney and pancreas.

Its subcellular location is the nucleus. Transcription factor predominantly involved in transcriptional repression. Binds to promoter/enhancer response elements that contain the imperfect 5'-AGGTCA-3' direct or inverted repeats with various spacings which are also recognized by other nuclear hormone receptors. Involved in modulation of hormonal responses. Represses transcriptional activity of the lutropin-choriogonadotropic hormone receptor/LHCGR gene, the renin/REN gene and the oxytocin-neurophysin/OXT gene. Represses the triiodothyronine-dependent and -independent transcriptional activity of the thyroid hormone receptor gene in a cell type-specific manner. The corepressing function towards thyroid hormone receptor beta/THRB involves at least in part the inhibition of THRB binding to triiodothyronine response elements (TREs) by NR2F6. Inhibits NFATC transcription factor DNA binding and subsequently its transcriptional activity. Acts as transcriptional repressor of IL-17 expression in Th-17 differentiated CD4(+) T cells and may be involved in induction and/or maintenance of peripheral immunological tolerance and autoimmunity. Involved in development of forebrain circadian clock; is required early in the development of the locus coeruleus (LC). The chain is Nuclear receptor subfamily 2 group F member 6 (NR2F6) from Homo sapiens (Human).